A 105-amino-acid chain; its full sequence is Large ribosomal subunit protein eL42 (105 aa).

Residues 23–52 are disordered; sequence KVTQYKKGKESRLAQGRRRYDSKQKGFGGQ. Positions 29 to 46 are enriched in basic and acidic residues; it reads KGKESRLAQGRRRYDSKQ.

The protein belongs to the eukaryotic ribosomal protein eL42 family.

The sequence is that of Large ribosomal subunit protein eL42 (rpl-44) from Brugia malayi (Filarial nematode worm).